The chain runs to 858 residues: Elongation factor 2 (858 aa).

The region spanning A17 to V362 is the tr-type G domain. Residue A26–S33 coordinates GTP. T54 is modified (phosphothreonine). T57 is modified (phosphothreonine; by EEF2K). T59 is subject to Phosphothreonine. The residue at position 152 (K152) is an N6-succinyllysine. GTP is bound by residues N158–D161 and S216–L218. At K235 the chain carries N6-acetyllysine. Position 239 is an N6-acetyllysine; alternate (K239). A Glycyl lysine isopeptide (Lys-Gly) (interchain with G-Cter in SUMO1); alternate cross-link involves residue K239. At Y265 the chain carries Phosphotyrosine; by CSK. K272 is modified (N6-acetyllysine; alternate). Residue K272 is modified to N6-succinyllysine; alternate. Position 275 is an N6-acetyllysine (K275). K322 participates in a covalent cross-link: Glycyl lysine isopeptide (Lys-Gly) (interchain with G-Cter in SUMO). Residue S325 is modified to Phosphoserine. At Y373 the chain carries Phosphotyrosine; by CSK. Position 435 is a phosphothreonine (T435). An N6-acetyllysine mark is found at K439 and K445. S502 is subject to Phosphoserine. At K525 the chain carries N6,N6,N6-trimethyllysine; by EEF2KMT. A Glycyl lysine isopeptide (Lys-Gly) (interchain with G-Cter in SUMO) cross-link involves residue K529. K572 is modified (N6-succinyllysine). Position 595 is a phosphoserine; by CDK2 (S595). Residue K619 is modified to N6-acetyllysine. Diphthamide is present on H715.

This sequence belongs to the TRAFAC class translation factor GTPase superfamily. Classic translation factor GTPase family. EF-G/EF-2 subfamily. In terms of assembly, binds to 80S ribosomes. Actively translating ribosomes show mutually exclusive binding of eIF5a (EIF5A or EIF5A2) and EEF2/eEF2. Interacts with SERBP1; interaction sequesters EEF2/eEF2 at the A-site of the ribosome, thereby blocking the interaction sites of the mRNA-tRNA complex, promoting ribosome stabilization and hibernation. Interacts with HABP4; interaction takes place at the A-site of hibernating ribosomes and promotes ribosome stabilization. Component of the mRNA surveillance SURF complex, at least composed of ERF1, ERF3 (ERF3A or ERF3B), EEF2, UPF1/RENT1, SMG1, SMG8 and SMG9. Interacts with RBPMS2. Post-translationally, phosphorylation by EF-2 kinase completely inactivates EF-2; it requires prior phosphorylation by CDK2 at Ser-595 during mitotic prometaphase. Phosphorylation by CSK promotes SUMOylation, proteolytic cleavage, and nuclear translocation if the C-terminal fragment. In terms of processing, diphthamide is 2-[3-carboxyamido-3-(trimethyl-ammonio)propyl]histidine. ISGylated. Post-translationally, proteolytically processed at two sites following phosphorylation by CSK. In terms of processing, SUMOylated following phosphorylation by CSK, promotes proteolytic cleavage.

The protein resides in the cytoplasm. The protein localises to the nucleus. It catalyses the reaction GTP + H2O = GDP + phosphate + H(+). Functionally, catalyzes the GTP-dependent ribosomal translocation step during translation elongation. During this step, the ribosome changes from the pre-translocational (PRE) to the post-translocational (POST) state as the newly formed A-site-bound peptidyl-tRNA and P-site-bound deacylated tRNA move to the P and E sites, respectively. Catalyzes the coordinated movement of the two tRNA molecules, the mRNA and conformational changes in the ribosome. In Bos taurus (Bovine), this protein is Elongation factor 2 (EEF2).